The chain runs to 1168 residues: Homeodomain-interacting protein kinase 2 (1168 aa).

A Phosphoserine modification is found at S16. K32 participates in a covalent cross-link: Glycyl lysine isopeptide (Lys-Gly) (interchain with G-Cter in SUMO); alternate. A Glycyl lysine isopeptide (Lys-Gly) (interchain with G-Cter in SUMO2); alternate cross-link involves residue K32. The transcriptional corepression stretch occupies residues 97–230 (SASSTSVTGQ…TNEIVAIKIL (134 aa)). Residues S118 and S135 each carry the phosphoserine modification. T141 bears the Phosphothreonine mark. The interaction with DAXX stretch occupies residues 189–520 (HEVLCSMTNT…DADKRITPIE (332 aa)). Residues 199-527 (YEVLEFLGRG…PIETLNHPFV (329 aa)) form the Protein kinase domain. ATP is bound by residues 205–213 (LGRGTFGQV) and K228. Phosphothreonine occurs at positions 252 and 273. The active-site Proton acceptor is the D324. Phosphotyrosine is present on Y361. A Phosphoserine modification is found at S441. T482, T517, and T566 each carry phosphothreonine. The tract at residues 539 to 816 (THVKSCFQNM…KENTPPRCAM (278 aa)) is interaction with SKI and SMAD1. The tract at residues 595-772 (PSAASMAAVA…MRQQPTSTTS (178 aa)) is interaction with DAZAP2. 2 positions are modified to phosphoserine: S607 and S641. T660 carries the phosphothreonine modification. An interaction with POU4F1 region spans residues 724 to 869 (RNTHAHGSHY…ITISSDTDEE (146 aa)). The tract at residues 746-848 (HVTLPAAQPL…TRERQRQTIV (103 aa)) is interaction with CTBP1. The segment at 759–869 (VAHVMRQQPT…ITISSDTDEE (111 aa)) is interaction with HMGA1. Residues 764-820 (RQQPTSTTSSRKSKQHQPSMRNVSTCEVTSSQSTSSPQRSKRVKENTPPRCAMVHSS) form a disordered region. Polar residues predominate over residues 765–791 (QQPTSTTSSRKSKQHQPSMRNVSTCEV). A Nuclear localization signal 1 (NLS1) motif is present at residues 774–777 (RKSK). 2 positions are modified to phosphoserine: S787 and S799. A compositionally biased stretch (low complexity) spans 792 to 801 (TSSQSTSSPQ). Positions 804–807 (KRVK) match the Nuclear localization signal 2 (NLS2) motif. Positions 812 to 907 (PRCAMVHSSP…YSDSSSNTSP (96 aa)) are interaction with TP53 and TP73. The interaction with UBE2I stretch occupies residues 845–879 (QTIVIPDTPSPTVSVITISSDTDEEEEQKHAPTST). A localization to nuclear speckles region spans residues 845–952 (QTIVIPDTPS…PLKTQASEVL (108 aa)). Residues 845 to 952 (QTIVIPDTPS…PLKTQASEVL (108 aa)) form a required for localization to nuclear speckles region. An interaction with UBL1 region spans residues 854 to 876 (SPTVSVITISSDTDEEEEQKHAP). An SUMO interaction motifs (SIM); required for nuclear localization and kinase activity region spans residues 856–880 (TVSVITISSDTDEEEEQKHAPTSTV). The disordered stretch occupies residues 894–936 (HDSPYSDSSSNTSPYSVQQRTGHNGTNTLDTKGALENHCTGNP). A compositionally biased stretch (low complexity) spans 895–909 (DSPYSDSSSNTSPYS). S906 carries the post-translational modification Phosphoserine. Positions 907–1022 (PYSVQQRTGH…LSQAQPHMAT (116 aa)) are interaction with AXIN1. Positions 910 to 923 (VQQRTGHNGTNTLD) are enriched in polar residues. Glycyl lysine isopeptide (Lys-Gly) (interchain with G-Cter in SUMO2) cross-links involve residues K925 and K945. The interval 956–1168 (DSLGPAVSTG…PAKVNQYPYI (213 aa)) is autoinhibitory domain (AID). The disordered stretch occupies residues 960 to 1030 (PAVSTGHHSS…ATDRTGSHRR (71 aa)). At S963 the chain carries Phosphoserine. Composition is skewed to low complexity over residues 965 to 991 (GHHSSSFKCKSSSTVTSTSGHSSGSSS) and 998 to 1018 (QQRPGPHFQQQQPLNLSQAQP). Phosphoserine occurs at positions 1014, 1125, and 1158. Residue K1161 forms a Glycyl lysine isopeptide (Lys-Gly) (interchain with G-Cter in SUMO) linkage.

This sequence belongs to the protein kinase superfamily. CMGC Ser/Thr protein kinase family. HIPK subfamily. As to quaternary structure, interacts with CREB1, SIAH1, WSB1, CBX4, TRADD, p53/TP53, TP73, TP63, CREBBP, DAXX, P53DINP1, SKI, SMAD1, SMAD2 and SMAD3, but not SMAD4. Interacts with ATF1, PML, RUNX1, EP300, NKX1-2, NKX2-5, UBE2I, HMGA1, CTBP1, AXIN1, NLK, MYB, POU4F1, POU4F2, POU4F3, UBE2I, UBL1 and ZBTB4. Probably part of a complex consisting of p53/TP53, HIPK2 and AXIN1. Interacts with SP100; positively regulates TP53-dependent transcription. Interacts with DAZAP2; the interaction results in phosphorylation of DAZAP2 which causes localization of DAZAP2 to the nucleus, reduces interaction of DAZAP2 with HIPK2 and prevents DAZAP2-dependent degradation of HIPK2. Interacts with SIAH1; the interaction is promoted by DAZAP2 and results in SIAH1-mediated ubiquitination and subsequent proteasomal degradation of HIPK2. In terms of processing, autophosphorylation at Tyr-361 in the activation loop activates the kinase and promotes nuclear localization. Post-translationally, sumoylated. When conjugated it is directed to nuclear speckles. Desumoylated by SENP1. Sumoylation on Lys-32 is promoted by the E3 SUMO-protein ligase CBX4. Ubiquitinated by FBXO3, WSB1 and SIAH1, leading to rapid proteasome-dependent degradation. The degradation mediated by FBXO3, but not ubiquitination, is prevented in the presence of PML. The degradation mediated by WSB1 and SIAH1 is reversibly reduced upon DNA damage. In terms of processing, cleaved at Asp-895 and Asp-956 by CASP6 in a p53/TP53-dependent manner. The cleaved form lacks the autoinhibitory C-terminal domain (AID), resulting in a hyperactive kinase, which potentiates p53/TP53 Ser-46 phosphorylation and subsequent activation of the cell death machinery.

The protein localises to the nucleus. The protein resides in the PML body. It is found in the cytoplasm. It carries out the reaction L-seryl-[protein] + ATP = O-phospho-L-seryl-[protein] + ADP + H(+). It catalyses the reaction L-threonyl-[protein] + ATP = O-phospho-L-threonyl-[protein] + ADP + H(+). Its function is as follows. Serine/threonine-protein kinase involved in transcription regulation, p53/TP53-mediated cellular apoptosis and regulation of the cell cycle. Acts as a corepressor of several transcription factors, including SMAD1 and POU4F1/Brn3a and probably NK homeodomain transcription factors. Phosphorylates PDX1, ATF1, PML, p53/TP53, CREB1, CTBP1, CBX4, RUNX1, EP300, CTNNB1, HMGA1, ZBTB4 and DAZAP2. Inhibits cell growth and promotes apoptosis through the activation of p53/TP53 both at the transcription level and at the protein level (by phosphorylation and indirect acetylation). The phosphorylation of p53/TP53 may be mediated by a p53/TP53-HIPK2-AXIN1 complex. Involved in the response to hypoxia by acting as a transcriptional co-suppressor of HIF1A. Mediates transcriptional activation of TP73. In response to TGFB, cooperates with DAXX to activate JNK. Negative regulator through phosphorylation and subsequent proteasomal degradation of CTNNB1 and the antiapoptotic factor CTBP1. In the Wnt/beta-catenin signaling pathway acts as an intermediate kinase between MAP3K7/TAK1 and NLK to promote the proteasomal degradation of MYB. Phosphorylates CBX4 upon DNA damage and promotes its E3 SUMO-protein ligase activity. Activates CREB1 and ATF1 transcription factors by phosphorylation in response to genotoxic stress. In response to DNA damage, stabilizes PML by phosphorylation. PML, HIPK2 and FBXO3 may act synergically to activate p53/TP53-dependent transactivation. Promotes angiogenesis, and is involved in erythroid differentiation, especially during fetal liver erythropoiesis. Phosphorylation of RUNX1 and EP300 stimulates EP300 transcription regulation activity. Triggers ZBTB4 protein degradation in response to DNA damage. In response to DNA damage, phosphorylates DAZAP2 which localizes DAZAP2 to the nucleus, reduces interaction of DAZAP2 with HIPK2 and prevents DAZAP2-dependent ubiquitination of HIPK2 by E3 ubiquitin-protein ligase SIAH1 and subsequent proteasomal degradation. Modulates HMGA1 DNA-binding affinity. In response to high glucose, triggers phosphorylation-mediated subnuclear localization shifting of PDX1. Involved in the regulation of eye size, lens formation and retinal lamination during late embryogenesis. The sequence is that of Homeodomain-interacting protein kinase 2 (Hipk2) from Mesocricetus auratus (Golden hamster).